A 56-amino-acid polypeptide reads, in one-letter code: Protein translocase subunit SecE (56 aa).

A helical transmembrane segment spans residues 30-50; that stretch reads VFWLVLFVSIFLGIVDYLMFL.

This sequence belongs to the SecE/SEC61-gamma family. As to quaternary structure, component of the Sec protein translocase complex. Heterotrimer consisting of SecY, SecE and SecG subunits. The heterotrimers can form oligomers, although 1 heterotrimer is thought to be able to translocate proteins. Interacts with the ribosome. Interacts with SecDF, and other proteins may be involved. Interacts with SecA.

The protein resides in the cell inner membrane. Essential subunit of the Sec protein translocation channel SecYEG. Clamps together the 2 halves of SecY. May contact the channel plug during translocation. This chain is Protein translocase subunit SecE, found in Borreliella burgdorferi (strain ATCC 35210 / DSM 4680 / CIP 102532 / B31) (Borrelia burgdorferi).